Consider the following 195-residue polypeptide: Dehydrin DHN1 (195 aa).

The segment at 1 to 195 (MAEYGDQYGR…IKEKLPGGHH (195 aa)) is disordered. Residues 37-48 (YGTTGTTVGYGT) show a composition bias toward low complexity. Residues 50–64 (QCVTTVTTGAQKTDQ) show a composition bias toward polar residues. Residues 65–88 (YGTPGTTGAYGTDQYGTTGTTGEY) are compositionally biased toward low complexity. 2 stretches are compositionally biased toward basic and acidic residues: residues 136-153 (KEKI…DDQT) and 173-195 (SPEH…GGHH).

The protein belongs to the plant dehydrin family. Phosphorylated in vitro by CK2. As to expression, expressed in roots and leaves.

The protein localises to the cytoplasm. The protein resides in the nucleus. This chain is Dehydrin DHN1, found in Avicennia marina (Grey mangrove).